We begin with the raw amino-acid sequence, 275 residues long: 2,3,4,5-tetrahydropyridine-2,6-dicarboxylate N-succinyltransferase (275 aa).

Substrate contacts are provided by R108 and D145.

Belongs to the transferase hexapeptide repeat family. In terms of assembly, homotrimer.

The protein resides in the cytoplasm. The catalysed reaction is (S)-2,3,4,5-tetrahydrodipicolinate + succinyl-CoA + H2O = (S)-2-succinylamino-6-oxoheptanedioate + CoA. The protein operates within amino-acid biosynthesis; L-lysine biosynthesis via DAP pathway; LL-2,6-diaminopimelate from (S)-tetrahydrodipicolinate (succinylase route): step 1/3. This is 2,3,4,5-tetrahydropyridine-2,6-dicarboxylate N-succinyltransferase from Ruegeria pomeroyi (strain ATCC 700808 / DSM 15171 / DSS-3) (Silicibacter pomeroyi).